The chain runs to 358 residues: Serine/threonine-protein phosphatase 2A activator (358 aa).

A disordered region spans residues 1-20; sequence MAEGERQPPPDSSEEAPPAT. An N-acetylalanine modification is found at A2. Residues R183, T188, and G189 each contribute to the ATP site. Positions 243 and 249 each coordinate Mg(2+). Residues P339, Q342, and H343 each contribute to the ATP site.

This sequence belongs to the PTPA-type PPIase family. As to quaternary structure, associates with PP2A heterodimeric core enzyme PP2A(D), composed of a 36 kDa catalytic subunit (subunit C) and a 65 kDa constant regulatory subunit (PR65 or subunit A). Interacts with the catalytic subunit PPP2CA (via C-terminus). Interacts with PPP2CB. In terms of tissue distribution, widely expressed.

It localises to the cytoplasm. Its subcellular location is the nucleus. The enzyme catalyses [protein]-peptidylproline (omega=180) = [protein]-peptidylproline (omega=0). Its function is as follows. PPIases accelerate the folding of proteins. It catalyzes the cis-trans isomerization of proline imidic peptide bonds in oligopeptides. Acts as a regulatory subunit for serine/threonine-protein phosphatase 2A (PP2A). Modulates PP2A activity or substrate specificity, probably by inducing a conformational change in the catalytic subunit, a proposed direct target of the PPIase. Can reactivate inactive phosphatase PP2A-phosphatase methylesterase complexes (PP2A(i)) in presence of ATP and Mg(2+). Reversibly stimulates the variable phosphotyrosyl phosphatase activity of PP2A core heterodimer PP2A(D) in presence of ATP and Mg(2+) (in vitro). The phosphotyrosyl phosphatase activity is dependent of an ATPase activity of the PP2A(D):PPP2R4 complex. Is involved in apoptosis; the function appears to be independent from PP2A. In Homo sapiens (Human), this protein is Serine/threonine-protein phosphatase 2A activator.